Consider the following 836-residue polypeptide: Neuroligin-2 (836 aa).

The N-terminal stretch at 1 to 14 (MWLLALCLVGLAGA) is a signal peptide. The Extracellular segment spans residues 15–678 (QRGGGGPGGG…DSRDYSTELS (664 aa)). 2 N-linked (GlcNAc...) asparagine glycosylation sites follow: Asn-98 and Asn-136. Disulfide bonds link Cys-106–Cys-141, Cys-317–Cys-328, and Cys-487–Cys-521. The N-linked (GlcNAc...) asparagine glycan is linked to Asn-522. The tract at residues 623–661 (PPYATRWPPRTPGPGTSGTRRPPPPATLPPESDIDLGPR) is disordered. Residues 679–699 (VTVAVGASLLFLNILAFAALY) traverse the membrane as a helical segment. Residues 679–699 (VTVAVGASLLFLNILAFAALY) form a required for interaction with LHFPL4 region. The Cytoplasmic portion of the chain corresponds to 700–836 (YKRDRRQELR…LPHPHSTTRV (137 aa)). 2 disordered regions span residues 711–735 (RRLS…TAGR) and 791–836 (LLPS…TTRV). 2 positions are modified to phosphoserine: Ser-714 and Ser-719. Positions 717–728 (GGSGSGVPGGGP) are enriched in gly residues. The span at 796–819 (LGPPPPPPPPSLHPFGPFPPPPPT) shows a compositional bias: pro residues. Residues 824–836 (NNTLPHPHSTTRV) are compositionally biased toward polar residues.

This sequence belongs to the type-B carboxylesterase/lipase family. Interacts with neurexins NRXN1, NRXN2 and NRXN3. Interaction with neurexins is mediated by heparan sulfate glycan modification on neurexin. Interacts (via its C-terminus) with DLG4/PSD-95 (via PDZ domain 3). Interacts with PATJ. Interacts with GPHN. Interacts with MDGA1 and MDGA2. Found in a complex with MAGI2 and IGSF9B, where it interacts with MAGI2 (via WW 1, WW 2 and PDZ 2 domains). Identified in a complex of 720 kDa composed of LHFPL4, NLGN2, GABRA1, GABRB2, GABRG2 and GABRB3. Interacts with LHFPL4; leading to mutual regulation of the protein level and synaptic clustering. Interacts with GABRA1. As to expression, detected on hippocampus neurons, especially at inhibitory synapses. Detected in retina, in the outer and inner plexiform layer. Detected in pancreas, in islet of Langerhans beta cells (at protein level). Expressed in brain, spinal cord and dorsal root ganglion. Detected in brain, and at lower levels in pancreas islet beta cells.

The protein resides in the cell membrane. The protein localises to the postsynaptic cell membrane. Its subcellular location is the presynaptic cell membrane. Transmembrane scaffolding protein involved in cell-cell interactions via its interactions with neurexin family members. Mediates cell-cell interactions both in neurons and in other types of cells, such as Langerhans beta cells. Plays a role in synapse function and synaptic signal transmission, especially via gamma-aminobutyric acid receptors (GABA(A) receptors). Functions by recruiting and clustering synaptic proteins. Promotes clustering of postsynaptic GABRG2 and GPHN. Promotes clustering of postsynaptic LHFPL4. Modulates signaling by inhibitory synapses, and thereby plays a role in controlling the ratio of signaling by excitatory and inhibitory synapses and information processing. Required for normal signal amplitude from inhibitory synapses, but is not essential for normal signal frequency. May promote the initial formation of synapses, but is not essential for this. In vitro, triggers the de novo formation of presynaptic structures. Mediates cell-cell interactions between Langerhans beta cells and modulates insulin secretion. The sequence is that of Neuroligin-2 (Nlgn2) from Rattus norvegicus (Rat).